Reading from the N-terminus, the 167-residue chain is Lipoprotein signal peptidase (167 aa).

The next 3 helical transmembrane spans lie at 10–30 (LIWL…KAWV), 68–88 (WQMW…TFWL), and 98–118 (SALP…DRFL). Active-site residues include Asp124 and Asp142. A helical membrane pass occupies residues 138–158 (FNLADSAIVAGAIGIGLLSLF).

It belongs to the peptidase A8 family.

The protein localises to the cell inner membrane. The enzyme catalyses Release of signal peptides from bacterial membrane prolipoproteins. Hydrolyzes -Xaa-Yaa-Zaa-|-(S,diacylglyceryl)Cys-, in which Xaa is hydrophobic (preferably Leu), and Yaa (Ala or Ser) and Zaa (Gly or Ala) have small, neutral side chains.. It participates in protein modification; lipoprotein biosynthesis (signal peptide cleavage). In terms of biological role, this protein specifically catalyzes the removal of signal peptides from prolipoproteins. The protein is Lipoprotein signal peptidase of Xylella fastidiosa (strain M23).